The following is a 511-amino-acid chain: Sphingosine-1-phosphate transporter MFSD2B (511 aa).

Transmembrane regions (helical) follow at residues 108–128, 136–156, 236–256, 280–300, 323–343, 357–377, 379–399, 415–435, and 462–482; these read MPWM…LWFV, VLWY…YHVP, IAAG…FLGV, TMQF…SAAV, NLVL…QWFL, LMIP…AYVV, VASG…LPDV, AIFY…ALGI, and LLIG…LAFY.

It belongs to the major facilitator superfamily.

Its subcellular location is the cell membrane. The enzyme catalyses sphing-4-enine 1-phosphate(in) = sphing-4-enine 1-phosphate(out). It catalyses the reaction sphinganine 1-phosphate(in) = sphinganine 1-phosphate(out). The catalysed reaction is sphinga-4E,14Z-dienine-1-phosphate(in) = sphinga-4E,14Z-dienine-1-phosphate(out). Lipid transporter that specifically mediates export of sphingosine-1-phosphate in red blood cells and platelets. Sphingosine-1-phosphate is a signaling sphingolipid and its export from red blood cells into in the plasma is required for red blood cell morphology. Sphingosine-1-phosphate export from platelets is required for platelet aggregation and thrombus formation. In addition to export, also able to mediate S1P import. This is Sphingosine-1-phosphate transporter MFSD2B from Xenopus tropicalis (Western clawed frog).